The primary structure comprises 185 residues: Ribosome-recycling factor (185 aa).

Belongs to the RRF family.

The protein resides in the cytoplasm. Functionally, responsible for the release of ribosomes from messenger RNA at the termination of protein biosynthesis. May increase the efficiency of translation by recycling ribosomes from one round of translation to another. The protein is Ribosome-recycling factor of Halalkalibacterium halodurans (strain ATCC BAA-125 / DSM 18197 / FERM 7344 / JCM 9153 / C-125) (Bacillus halodurans).